Consider the following 92-residue polypeptide: Acylphosphatase (92 aa).

Residues 6-92 enclose the Acylphosphatase-like domain; the sequence is RMYVIVYGIV…TGEFASFDTY (87 aa). Catalysis depends on residues arginine 21 and asparagine 39.

It belongs to the acylphosphatase family.

It catalyses the reaction an acyl phosphate + H2O = a carboxylate + phosphate + H(+). This is Acylphosphatase (acyP) from Sulfolobus acidocaldarius (strain ATCC 33909 / DSM 639 / JCM 8929 / NBRC 15157 / NCIMB 11770).